A 687-amino-acid polypeptide reads, in one-letter code: Protein Smaug homolog 2 (687 aa).

Residues threonine 160 to serine 172 are compositionally biased toward basic and acidic residues. The segment at threonine 160–methionine 301 is disordered. Serine 172 carries the post-translational modification Phosphoserine. Low complexity-rich tracts occupy residues tryptophan 175–tryptophan 190 and histidine 200–proline 211. A compositionally biased stretch (polar residues) spans serine 215 to leucine 224. Phosphoserine is present on residues serine 271, serine 278, serine 279, and serine 281. Residues serine 278–serine 290 show a composition bias toward low complexity. One can recognise an SAM domain in the interval serine 299–glutamate 372. Threonine 400 carries the post-translational modification Phosphothreonine. Residues threonine 402–isoleucine 464 form a disordered region. Basic and acidic residues predominate over residues glycine 424–proline 435. Positions proline 448–aspartate 461 are enriched in low complexity. 5 positions are modified to phosphoserine: serine 548, serine 550, serine 556, serine 585, and serine 593. The residue at position 595 (arginine 595) is an Asymmetric dimethylarginine. Residues serine 600 to leucine 636 are disordered. A compositionally biased stretch (polar residues) spans glycine 617 to leucine 636. Serine 621 carries the phosphoserine modification.

It belongs to the SMAUG family.

It localises to the cytoplasm. It is found in the nucleus. Has transcriptional repressor activity. Overexpression inhibits the transcriptional activities of AP-1, p53/TP53 and CDKN1A. The chain is Protein Smaug homolog 2 (Samd4b) from Mus musculus (Mouse).